A 740-amino-acid polypeptide reads, in one-letter code: Elongation factor 2 (740 aa).

Positions 23 to 264 (AQIRNAGTLA…MIIEHVPPPN (242 aa)) constitute a tr-type G domain. GTP is bound by residues 32-39 (AHVDHGKT), 98-102 (DTPGH), and 152-155 (NKID). His-605 is modified (diphthamide).

Belongs to the TRAFAC class translation factor GTPase superfamily. Classic translation factor GTPase family. EF-G/EF-2 subfamily.

It is found in the cytoplasm. Its function is as follows. Catalyzes the GTP-dependent ribosomal translocation step during translation elongation. During this step, the ribosome changes from the pre-translocational (PRE) to the post-translocational (POST) state as the newly formed A-site-bound peptidyl-tRNA and P-site-bound deacylated tRNA move to the P and E sites, respectively. Catalyzes the coordinated movement of the two tRNA molecules, the mRNA and conformational changes in the ribosome. The sequence is that of Elongation factor 2 from Pyrobaculum islandicum (strain DSM 4184 / JCM 9189 / GEO3).